A 657-amino-acid polypeptide reads, in one-letter code: Pentatricopeptide repeat-containing protein At1g11710, mitochondrial (657 aa).

Residues 1-74 constitute a mitochondrion transit peptide; the sequence is MFGHVFSRRT…REFRSSPKLA (74 aa). PPR repeat units lie at residues 147–181, 182–216, 217–251, 252–282, 290–324, 325–359, 360–394, 395–429, 430–464, 465–499, 500–530, 531–565, 568–602, and 603–637; these read SPDV…GFCV, SVHA…GYVE, NVNT…GVWP, NVVS…MGMM, NAVT…GVDC, NERT…GLVV, NTVI…NMQI, DRFT…KLVE, DIVC…GLSL, DAIS…NKTS, NLVI…MEIK, DIVT…DGEK, SLVT…GVVP, and DSIT…GVTP.

Belongs to the PPR family. P subfamily.

The protein resides in the mitochondrion. This is Pentatricopeptide repeat-containing protein At1g11710, mitochondrial from Arabidopsis thaliana (Mouse-ear cress).